Consider the following 330-residue polypeptide: D-alanine--D-alanine ligase (330 aa).

Residues 122–323 (NRFLSGFGIR…MKEVLCTIIR (202 aa)) enclose the ATP-grasp domain. 151–206 (TARMGLPLFVKPNVGGSSIATTKVVEAAQLLPAIGQAFSEGEEVMIERLICGTEVT) lines the ATP pocket. The Mg(2+) site is built by D277, E290, and N292.

Belongs to the D-alanine--D-alanine ligase family. Mg(2+) serves as cofactor. It depends on Mn(2+) as a cofactor.

Its subcellular location is the cytoplasm. It catalyses the reaction 2 D-alanine + ATP = D-alanyl-D-alanine + ADP + phosphate + H(+). The protein operates within cell wall biogenesis; peptidoglycan biosynthesis. Functionally, cell wall formation. This Porphyromonas gingivalis (strain ATCC 33277 / DSM 20709 / CIP 103683 / JCM 12257 / NCTC 11834 / 2561) protein is D-alanine--D-alanine ligase.